The chain runs to 345 residues: NADPH dehydrogenase (345 aa).

Position 23-26 (23-26 (SPMC)) interacts with FMN. Residue tyrosine 28 participates in substrate binding. FMN contacts are provided by alanine 60 and glutamine 102. 164–167 (HGAH) provides a ligand contact to substrate. FMN-binding positions include arginine 215 and 307–308 (GR).

The protein belongs to the NADH:flavin oxidoreductase/NADH oxidase family. NamA subfamily. Homotetramer. It depends on FMN as a cofactor.

It catalyses the reaction A + NADPH + H(+) = AH2 + NADP(+). Functionally, catalyzes the reduction of the double bond of an array of alpha,beta-unsaturated aldehydes and ketones. It also reduces the nitro group of nitroester and nitroaromatic compounds. It could have a role in detoxification processes. This chain is NADPH dehydrogenase, found in Bacillus thuringiensis (strain Al Hakam).